A 327-amino-acid chain; its full sequence is Aspartate--ammonia ligase (327 aa).

This sequence belongs to the class-II aminoacyl-tRNA synthetase family. AsnA subfamily.

It is found in the cytoplasm. The enzyme catalyses L-aspartate + NH4(+) + ATP = L-asparagine + AMP + diphosphate + H(+). It participates in amino-acid biosynthesis; L-asparagine biosynthesis; L-asparagine from L-aspartate (ammonia route): step 1/1. The chain is Aspartate--ammonia ligase from Bacillus cereus (strain ATCC 10987 / NRS 248).